A 759-amino-acid chain; its full sequence is Phosphoribosylformylglycinamidine synthase subunit PurL (759 aa).

Residue His61 is part of the active site. The ATP site is built by Tyr64 and Lys105. Residue Glu107 participates in Mg(2+) binding. Substrate contacts are provided by residues 108–111 (SHNH) and Arg130. His109 serves as the catalytic Proton acceptor. Asp131 contacts Mg(2+). Gln260 is a substrate binding site. A Mg(2+)-binding site is contributed by Asp288. Substrate is bound at residue 332–334 (ESQ). 2 residues coordinate ATP: Asp520 and Gly557. Mg(2+) is bound at residue Asn558. Residue Ser560 coordinates substrate.

Belongs to the FGAMS family. In terms of assembly, monomer. Part of the FGAM synthase complex composed of 1 PurL, 1 PurQ and 2 PurS subunits.

The protein resides in the cytoplasm. The enzyme catalyses N(2)-formyl-N(1)-(5-phospho-beta-D-ribosyl)glycinamide + L-glutamine + ATP + H2O = 2-formamido-N(1)-(5-O-phospho-beta-D-ribosyl)acetamidine + L-glutamate + ADP + phosphate + H(+). The protein operates within purine metabolism; IMP biosynthesis via de novo pathway; 5-amino-1-(5-phospho-D-ribosyl)imidazole from N(2)-formyl-N(1)-(5-phospho-D-ribosyl)glycinamide: step 1/2. Part of the phosphoribosylformylglycinamidine synthase complex involved in the purines biosynthetic pathway. Catalyzes the ATP-dependent conversion of formylglycinamide ribonucleotide (FGAR) and glutamine to yield formylglycinamidine ribonucleotide (FGAM) and glutamate. The FGAM synthase complex is composed of three subunits. PurQ produces an ammonia molecule by converting glutamine to glutamate. PurL transfers the ammonia molecule to FGAR to form FGAM in an ATP-dependent manner. PurS interacts with PurQ and PurL and is thought to assist in the transfer of the ammonia molecule from PurQ to PurL. This chain is Phosphoribosylformylglycinamidine synthase subunit PurL, found in Thermoplasma volcanium (strain ATCC 51530 / DSM 4299 / JCM 9571 / NBRC 15438 / GSS1).